Reading from the N-terminus, the 121-residue chain is MTQSTEDTLLRLAAVIDSRKGGDPDQSYVSRLFHKGDDAVLKKIGEEATEVVLAAKDVRQGGAPTALVGEVADLWFHCLVMLSHFDLSPADVIGELERREGLSGIEEKALRKRREREENGG.

It belongs to the PRA-PH family.

It localises to the cytoplasm. It catalyses the reaction 1-(5-phospho-beta-D-ribosyl)-ATP + H2O = 1-(5-phospho-beta-D-ribosyl)-5'-AMP + diphosphate + H(+). It participates in amino-acid biosynthesis; L-histidine biosynthesis; L-histidine from 5-phospho-alpha-D-ribose 1-diphosphate: step 2/9. The chain is Phosphoribosyl-ATP pyrophosphatase from Burkholderia ambifaria (strain MC40-6).